The primary structure comprises 435 residues: Eukaryotic peptide chain release factor subunit 1-2 (435 aa).

At Ala2 the chain carries N-acetylalanine.

The protein belongs to the eukaryotic release factor 1 family. In terms of assembly, heterodimer of two subunits, one of which binds GTP. Interacts with OR.

Its subcellular location is the cytoplasm. Functionally, directs the termination of nascent peptide synthesis (translation) in response to the termination codons UAA, UAG and UGA. Modulates plant growth and development. The chain is Eukaryotic peptide chain release factor subunit 1-2 from Brassica oleracea var. botrytis (Cauliflower).